Consider the following 276-residue polypeptide: Putative pyruvate, phosphate dikinase regulatory protein (276 aa).

An ADP-binding site is contributed by 154 to 161; sequence GVSRTSKS.

This sequence belongs to the pyruvate, phosphate/water dikinase regulatory protein family. PDRP subfamily.

It carries out the reaction N(tele)-phospho-L-histidyl/L-threonyl-[pyruvate, phosphate dikinase] + ADP = N(tele)-phospho-L-histidyl/O-phospho-L-threonyl-[pyruvate, phosphate dikinase] + AMP + H(+). It catalyses the reaction N(tele)-phospho-L-histidyl/O-phospho-L-threonyl-[pyruvate, phosphate dikinase] + phosphate + H(+) = N(tele)-phospho-L-histidyl/L-threonyl-[pyruvate, phosphate dikinase] + diphosphate. Functionally, bifunctional serine/threonine kinase and phosphorylase involved in the regulation of the pyruvate, phosphate dikinase (PPDK) by catalyzing its phosphorylation/dephosphorylation. This Wolbachia pipientis wMel protein is Putative pyruvate, phosphate dikinase regulatory protein.